The following is a 264-amino-acid chain: Acyl-[acyl-carrier-protein]--UDP-N-acetylglucosamine O-acyltransferase (264 aa).

Belongs to the transferase hexapeptide repeat family. LpxA subfamily. In terms of assembly, homotrimer.

Its subcellular location is the cytoplasm. The catalysed reaction is a (3R)-hydroxyacyl-[ACP] + UDP-N-acetyl-alpha-D-glucosamine = a UDP-3-O-[(3R)-3-hydroxyacyl]-N-acetyl-alpha-D-glucosamine + holo-[ACP]. The protein operates within glycolipid biosynthesis; lipid IV(A) biosynthesis; lipid IV(A) from (3R)-3-hydroxytetradecanoyl-[acyl-carrier-protein] and UDP-N-acetyl-alpha-D-glucosamine: step 1/6. Functionally, involved in the biosynthesis of lipid A, a phosphorylated glycolipid that anchors the lipopolysaccharide to the outer membrane of the cell. The sequence is that of Acyl-[acyl-carrier-protein]--UDP-N-acetylglucosamine O-acyltransferase from Rickettsia conorii (strain ATCC VR-613 / Malish 7).